A 267-amino-acid polypeptide reads, in one-letter code: NAD(P)H-hydrate epimerase (267 aa).

Positions 27-242 (AQKIDEDLMS…DLEAKFDLQL (216 aa)) constitute a YjeF N-terminal domain. (6S)-NADPHX is bound at residue 78-82 (NQGGD). K(+) is bound by residues Gln79 and Asp142. Residues 146 to 152 (GFNFKGD) and Asp185 contribute to the (6S)-NADPHX site. Ser188 is a binding site for K(+).

The protein belongs to the NnrE/AIBP family. K(+) serves as cofactor.

It localises to the cytoplasm. The protein resides in the mitochondrion. The catalysed reaction is (6R)-NADHX = (6S)-NADHX. It carries out the reaction (6R)-NADPHX = (6S)-NADPHX. In terms of biological role, catalyzes the epimerization of the S- and R-forms of NAD(P)HX, a damaged form of NAD(P)H that is a result of enzymatic or heat-dependent hydration. This is a prerequisite for the S-specific NAD(P)H-hydrate dehydratase to allow the repair of both epimers of NAD(P)HX. The sequence is that of NAD(P)H-hydrate epimerase from Mycosarcoma maydis (Corn smut fungus).